The primary structure comprises 258 residues: MLILISPAKTLDYQSPLTTTRYTLPELLDNSQQLIHEARKLTPPQISTLMRISDKLAGINAARFHDWQPDFTPENARQAILAFKGDVYTGLQAETFSEDDFDFAQQHLRMLSGLYGVLRPLDLMQPYRLEMGIRLENARGKDLYQFWGDIITNKLNEALAAQGDNVVINLASDEYFKSVKPKKLNAEIIKPVFLDEKNGKFKIISFYAKKARGLMSRFIIENRLTKPEQLTGFNSEGYFFDEASSSNGELVFKRYEQR.

Belongs to the UPF0246 family.

This Escherichia coli O157:H7 protein is UPF0246 protein YaaA.